A 318-amino-acid chain; its full sequence is Protoheme IX farnesyltransferase (318 aa).

9 helical membrane-spanning segments follow: residues 34-54, 55-75, 95-115, 118-138, 155-175, 182-202, 228-250, 254-273, and 287-307; these read VMSL…GQIN, PVIG…SGAL, IPAG…LSAF, IILG…TIFF, IVIG…CVTG, IVLF…LALF, IVVY…FASL, AFAT…VLRM, and FAFS…DYMI.

Belongs to the UbiA prenyltransferase family. Protoheme IX farnesyltransferase subfamily.

It is found in the cell inner membrane. It catalyses the reaction heme b + (2E,6E)-farnesyl diphosphate + H2O = Fe(II)-heme o + diphosphate. It functions in the pathway porphyrin-containing compound metabolism; heme O biosynthesis; heme O from protoheme: step 1/1. Its function is as follows. Converts heme B (protoheme IX) to heme O by substitution of the vinyl group on carbon 2 of heme B porphyrin ring with a hydroxyethyl farnesyl side group. This is Protoheme IX farnesyltransferase from Sinorhizobium fredii (strain NBRC 101917 / NGR234).